The chain runs to 212 residues: Small ribosomal subunit protein uS5 (212 aa).

The tract at residues 1–42 (MPGRERRDGGRSADKNDNNKGRNDRGRNDRNNRRGRGRDDDR) is disordered. Positions 45–108 (YIERVVTINR…EEARKNFFRV (64 aa)) constitute an S5 DRBM domain.

The protein belongs to the universal ribosomal protein uS5 family. In terms of assembly, part of the 30S ribosomal subunit. Contacts proteins S4 and S8.

Its function is as follows. With S4 and S12 plays an important role in translational accuracy. Located at the back of the 30S subunit body where it stabilizes the conformation of the head with respect to the body. The sequence is that of Small ribosomal subunit protein uS5 from Corynebacterium kroppenstedtii (strain DSM 44385 / JCM 11950 / CIP 105744 / CCUG 35717).